Consider the following 214-residue polypeptide: MSTVAQDSAPGGGKIQDAMEQGAPGASSAAVVPEGGHYTQTPSPAFQAVKKNINHMSAFSLGLRVAEFVLSVIAFSLMASADQNGAVYSTFTSYSFVLAVNVLVVFYTIGQIIMSVLLLVSGSTPKKIYLFITFGCDQLSAFLLMAAGAAGASVALIINRGGVTDAYGNGCIDGKITSFCSHAQASVAFTFLSFFCMVISSLLGVYSLAPYLIL.

The tract at residues 1 to 20 (MSTVAQDSAPGGGKIQDAME) is disordered. Over 1 to 57 (MSTVAQDSAPGGGKIQDAMEQGAPGASSAAVVPEGGHYTQTPSPAFQAVKKNINHMS) the chain is Cytoplasmic. A helical membrane pass occupies residues 58–78 (AFSLGLRVAEFVLSVIAFSLM). The Extracellular portion of the chain corresponds to 79-99 (ASADQNGAVYSTFTSYSFVLA). A helical transmembrane segment spans residues 100 to 120 (VNVLVVFYTIGQIIMSVLLLV). The Cytoplasmic segment spans residues 121-138 (SGSTPKKIYLFITFGCDQ). The chain crosses the membrane as a helical span at residues 139–159 (LSAFLLMAAGAAGASVALIIN). The Extracellular portion of the chain corresponds to 160 to 193 (RGGVTDAYGNGCIDGKITSFCSHAQASVAFTFLS). The helical transmembrane segment at 194–214 (FFCMVISSLLGVYSLAPYLIL) threads the bilayer.

It belongs to the Casparian strip membrane proteins (CASP) family. Homodimer and heterodimers.

It localises to the cell membrane. This Physcomitrium patens (Spreading-leaved earth moss) protein is CASP-like protein UU5.